We begin with the raw amino-acid sequence, 349 residues long: Glycine-rich cell wall structural protein (349 aa).

The N-terminal stretch at 1–23 is a signal peptide; the sequence is MGKVSFGFLGLMLVVVVIGVVEC.

The protein resides in the secreted. It localises to the cell wall. In terms of biological role, responsible for plasticity of the cell wall. The chain is Glycine-rich cell wall structural protein from Arabidopsis thaliana (Mouse-ear cress).